The following is a 184-amino-acid chain: Large ribosomal subunit protein uL15 (184 aa).

Residues 1–45 (MNLSSLRPAKGSVRNKKRVGRGQGSGNGTTAGKGNKGQQARSGYK) are disordered. A compositionally biased stretch (gly residues) spans 21–35 (RGQGSGNGTTAGKGN).

It belongs to the universal ribosomal protein uL15 family. Part of the 50S ribosomal subunit.

Functionally, binds to the 23S rRNA. This is Large ribosomal subunit protein uL15 from Chlorobium chlorochromatii (strain CaD3).